The sequence spans 126 residues: Large ribosomal subunit protein bL12 (126 aa).

The protein belongs to the bacterial ribosomal protein bL12 family. Homodimer. Part of the ribosomal stalk of the 50S ribosomal subunit. Forms a multimeric L10(L12)X complex, where L10 forms an elongated spine to which 2 to 4 L12 dimers bind in a sequential fashion. Binds GTP-bound translation factors.

Functionally, forms part of the ribosomal stalk which helps the ribosome interact with GTP-bound translation factors. Is thus essential for accurate translation. The protein is Large ribosomal subunit protein bL12 of Acidobacterium capsulatum (strain ATCC 51196 / DSM 11244 / BCRC 80197 / JCM 7670 / NBRC 15755 / NCIMB 13165 / 161).